The following is a 185-amino-acid chain: Protein DP71L (185 aa).

Positions 1-15 are enriched in basic residues; the sequence is MSRRNKKRSRRRRKK. The tract at residues 1 to 38 is disordered; sequence MSRRNKKRSRRRRKKPLNDIQPGPSKSSAQDEPIKSVS. Important for host CHOP inhibition stretches follow at residues 126–128 and 170–174; these read VHF and LSTVF.

It belongs to the asfivirus DP71L family. In terms of assembly, interacts (via C-terminus) with host PPP1CB.

Its function is as follows. Interacts with the host phosphatase PP1 catalytic subunit (PPP1CB) and recruits it to dephosphorylate EIF2S1/eIF2alpha and therefore restores the host translation that has been shut-down by the host. Also inhibits the EIF2S1/eIF2alpha-ATF4-DDIT3/CHOP pathway. This is Protein DP71L from African swine fever virus (isolate Pig/Kenya/KEN-50/1950) (ASFV).